The chain runs to 308 residues: 3'(2'),5'-bisphosphate nucleotidase 1 (308 aa).

An N-acetylalanine modification is found at Ala-2. Asp-51 acts as the Proton acceptor in catalysis. Residues Glu-74, Asp-117, Val-119, and Asp-120 each coordinate Mg(2+). Thr-122 serves as the catalytic Proton acceptor. Thr-122 carries the phosphothreonine modification. The AMP site is built by Thr-195, His-198, Gly-220, and Lys-224. Ser-240 is modified (phosphoserine). Lys-244 is subject to N6-succinyllysine. Asp-247 contributes to the Mg(2+) binding site.

It belongs to the inositol monophosphatase superfamily. The cofactor is Mg(2+). In terms of tissue distribution, highly expressed in heart, brain, spleen, lung, liver, skeletal muscle, kidney and testis.

The enzyme catalyses adenosine 3',5'-bisphosphate + H2O = AMP + phosphate. It carries out the reaction adenosine 2',5'-bisphosphate + H2O = AMP + phosphate. It catalyses the reaction 3'-phosphoadenylyl sulfate + H2O = adenosine 5'-phosphosulfate + phosphate. The catalysed reaction is 1D-myo-inositol 1,4-bisphosphate + H2O = 1D-myo-inositol 4-phosphate + phosphate. The enzyme catalyses 1D-myo-inositol 1,3,4-trisphosphate + H2O = 1D-myo-inositol 3,4-bisphosphate + phosphate. Inhibited by Li(+) and Ca(2+), but not by Na(+). In terms of biological role, phosphatase that converts 3'(2')-phosphoadenosine 5'-phosphate (PAP) to AMP and adenosine 3'-phosphate 5'-phosphosulfate (PAPS) to adenosine 5'-phosphosulfate (APS). Is also able to hydrolyze inositol 1,4-bisphosphate (Ins(1,4)P2) and inositol 1,3,4-trisphosphate (Ins(1,3,4)P3), but is not active on AMP, 3'-AMP, fructose-1,6-bisphosphate, Ins(1)P, Ins(2)P and Ins(1,4,5)P3. Probably prevents the toxic accumulation of PAP, a compound which inhibits a variety of proteins, including PAPS-utilizing enzymes such as sulfotransferases, and RNA processing enzymes. Could also play a role in inositol recycling and phosphoinositide metabolism. This Rattus norvegicus (Rat) protein is 3'(2'),5'-bisphosphate nucleotidase 1 (Bpnt1).